The sequence spans 255 residues: Small ribosomal subunit protein uS2 (255 aa).

A disordered region spans residues 226–255; sequence QGVSNEEVAAEQNIDLDEKEKSEETEATEE.

Belongs to the universal ribosomal protein uS2 family.

The polypeptide is Small ribosomal subunit protein uS2 (Staphylococcus aureus (strain Mu3 / ATCC 700698)).